Consider the following 512-residue polypeptide: RCC1 domain-containing protein DDB_G0279253 (512 aa).

RCC1 repeat units lie at residues 1 to 56, 58 to 134, 135 to 185, 197 to 248, 249 to 319, 321 to 384, 386 to 443, and 454 to 512; these read MKIY…MIID, GDLY…ACDN, NGNI…NNNN, SGGV…ALSS, ENDV…LLDI, FKNV…LLTN, DKLY…IQVY, and NNNI…FILP. Over residues 66-77 the composition is skewed to polar residues; it reads NDSGQLGINSNE. Disordered stretches follow at residues 66-85 and 162-200; these read NDSGQLGINSNEQQQQQQQQ and STSNNKNNNNNNNNNNNNNNNNNNNNNNNNNNNNNSGGV. Low complexity predominate over residues 162–196; that stretch reads STSNNKNNNNNNNNNNNNNNNNNNNNNNNNNNNNN.

This is RCC1 domain-containing protein DDB_G0279253 from Dictyostelium discoideum (Social amoeba).